We begin with the raw amino-acid sequence, 189 residues long: Putative manganese efflux pump MntP (189 aa).

Transmembrane regions (helical) follow at residues 3–23 (LSAT…ASIG), 41–61 (LIFG…GLFA), 65–85 (ILEW…CRMI), 104–124 (FWVL…IGVG), 132–152 (IVHT…LGML), and 165–185 (AEII…YEHI).

Belongs to the MntP (TC 9.B.29) family.

It localises to the cell inner membrane. Functionally, probably functions as a manganese efflux pump. The protein is Putative manganese efflux pump MntP of Yersinia enterocolitica serotype O:8 / biotype 1B (strain NCTC 13174 / 8081).